The following is a 741-amino-acid chain: MASNGAYPVLGPGVTVNPGTSLSVFTALPFATPSPGPTHRPPLVTAVVPPAGPLVLSAFPSTPLVAGQDGRGPSGAGASNVFVQMRTEVGPVKPPQAQTLILTQAPLVWQAPGTLCGGVMCPPPLLLAAAPGVPVTSAQVVGGTQACEGGWSHGLPLPPPPPAAQVAPIVSPGNAGPWPQGAHGEGSLAPSQAKARPDDSCKPKSVYENFRLWQHYKPLARRHLPQSPDTEALSCFLIPVLRSLARRKPTMTLEEGLWRAMREWQHTSNFDRMIFYEMAAKFLEFEAEEEMQIQKSQWMKGPQSLPPPAPPRLEPRGPPAPEVVKQPVYLPSKDGPKAPTACLPPPRPQRPAETKAHLPPPRPPRPAETKVPEEIPPEVVQEYVDIMEELLGSHPGDTGEPEGQREKGKVEQPQEEDGMTSDPGLLSYIDKLCSQEDFVTKVEAVIHPRFLEELLSPDPQMDFLALSQELEQEEGLTLAQLVEKRLLSLKEKGCGRAAPRHGTARLDSSPSEFAAGQEAAREVPDPQQRVSVETSPPQTAAQDPQGQGRVRTGMARSEDPAVLLGCQDSPRLKAVRPTSPPQDHRPTCPGLGTKDALGLPGESPVKESHGLAKGSSEETELPGMVYVVGSHHRLRPWRLSQSPVPSSGLLSPGGRGPQGALQSPSAQKRGLSPSPSPASKSKKRPLFGSPSPAEKTPHPGPGLRVSGEQSLAWGLGGPSQSQKRKGDPLASRRKKKRHCSQ.

5 disordered regions span residues 172–200 (PGNAGPWPQGAHGEGSLAPSQAKARPDDS), 293–375 (IQKS…PEEI), 391–424 (LGSHPGDTGEPEGQREKGKVEQPQEEDGMTSDPG), 496–624 (RAAP…LPGM), and 638–741 (RLSQ…HCSQ). Positions 304–321 (SLPPPAPPRLEPRGPPAP) are enriched in pro residues. Residues 402–412 (EGQREKGKVEQ) are compositionally biased toward basic and acidic residues. A compositionally biased stretch (polar residues) spans 528-545 (QRVSVETSPPQTAAQDPQ). A compositionally biased stretch (low complexity) spans 639–650 (LSQSPVPSSGLL). Residues 731 to 741 (SRRKKKRHCSQ) are compositionally biased toward basic residues.

The protein belongs to the NUT family.

The polypeptide is NUT family member 2G (NUTM2G) (Homo sapiens (Human)).